Reading from the N-terminus, the 268-residue chain is MRLIPLSTAQQVGKWSANYIVEKINAFAPSADRPFVLGLPTGGTPLATYKALIELHRAGKVSFQHVVTFNMDEYVGIPADHPQSYRTFMYENFFNHIDIKDENINLLNGNATDPQAECARYEAKIKSYGKINLFMGGVGNDGHIAFNEPASSLASRTRMKTLTEDTRLANSRFFDNDINKVPKYALTVGVGTLLDAEELMILATGINKAQAVQVATEGAVNHLWTISCVQLHPKAILVCDDPATMELRVKTLRYFQQIEAQERQQYQD.

The active-site Proton acceptor; for enolization step is the Asp-72. Asp-141 functions as the For ring-opening step in the catalytic mechanism. His-143 serves as the catalytic Proton acceptor; for ring-opening step. Glu-148 (for ring-opening step) is an active-site residue.

It belongs to the glucosamine/galactosamine-6-phosphate isomerase family. NagB subfamily. As to quaternary structure, homohexamer.

The catalysed reaction is alpha-D-glucosamine 6-phosphate + H2O = beta-D-fructose 6-phosphate + NH4(+). Its pathway is amino-sugar metabolism; N-acetylneuraminate degradation; D-fructose 6-phosphate from N-acetylneuraminate: step 5/5. Its activity is regulated as follows. Allosterically activated by N-acetylglucosamine 6-phosphate (GlcNAc6P). Functionally, catalyzes the reversible isomerization-deamination of glucosamine 6-phosphate (GlcN6P) to form fructose 6-phosphate (Fru6P) and ammonium ion. This chain is Glucosamine-6-phosphate deaminase, found in Proteus mirabilis (strain HI4320).